A 266-amino-acid chain; its full sequence is Type II iodothyronine deiodinase (266 aa).

Topologically, residues 1 to 9 (MGLLSVDLL) are lumenal. Residues 10–34 (ITLQILPVFFSNCLFLALYDSVILL) form a helical; Signal-anchor for type III membrane protein membrane-spanning segment. The Cytoplasmic segment spans residues 35–266 (KHVALLLSRS…KNFSKRUILD (232 aa)). Sec130 is an active-site residue. Non-standard amino acids (selenocysteine) are located at Sec130 and Sec263.

This sequence belongs to the iodothyronine deiodinase family. In terms of assembly, predominantly monomer. Can form homodimers but homodimerization is not essential for enzyme activity. Interacts with USP20 and USP33. Interacts with MARCHF6. Ubiquitinated by MARCHF6, leading to its degradation by the proteasome. Deubiquitinated by USP20 and USP33. Expressed in cerebral cortex, cerebellum, pituitary gland, mostly in anterior pituitary gland, and pineal gland, as well as in brown adipose tissue (BAT).

The protein localises to the endoplasmic reticulum membrane. The catalysed reaction is 3,3',5-triiodo-L-thyronine + iodide + A + H(+) = L-thyroxine + AH2. The enzyme catalyses 3,3'-diiodo-L-thyronine + iodide + A + H(+) = 3,3',5'-triiodo-L-thyronine + AH2. It catalyses the reaction 3'-iodo-L-thyronine + iodide + A + H(+) = 3',5'-diiodo-L-thyronine + AH2. It carries out the reaction 3,3'-diiodothyronamine + iodide + A + H(+) = 3,3',5'-triiodothyronamine + AH2. The catalysed reaction is 3'-iodothyronamine + iodide + A + H(+) = 3',5'-diiodothyronamine + AH2. Plays a crucial role in the metabolism of thyroid hormones (TH) and has specific roles in TH activation and inactivation by deiodination. Catalyzes the deiodination of L-thyroxine (T4) to 3,5,3'-triiodothyronine (T3) and 3',5'-diiodothyronine (3',5'-T2) to 3'-monoiodothyronine (3'-T1) via outer-ring deiodination (ORD). Catalyzes the deiodination of 3,3',5'-triiodothyronine (rT3) to 3,3'-diiodothyronine (3,3'-T2) via ORD. Catalyzes the phenolic ring deiodinations of 3,3',5'-triiodothyronamine and 3',5'- diiodothyronamine. The chain is Type II iodothyronine deiodinase (Dio2) from Rattus norvegicus (Rat).